We begin with the raw amino-acid sequence, 676 residues long: DNA-directed RNA polymerase subunit beta' (676 aa).

Zn(2+)-binding residues include cysteine 69, cysteine 71, cysteine 87, and cysteine 90. Residues aspartate 485, aspartate 487, and aspartate 489 each coordinate Mg(2+).

It belongs to the RNA polymerase beta' chain family. RpoC1 subfamily. In plastids the minimal PEP RNA polymerase catalytic core is composed of four subunits: alpha, beta, beta', and beta''. When a (nuclear-encoded) sigma factor is associated with the core the holoenzyme is formed, which can initiate transcription. Mg(2+) serves as cofactor. It depends on Zn(2+) as a cofactor.

The protein localises to the plastid. The protein resides in the chloroplast. It carries out the reaction RNA(n) + a ribonucleoside 5'-triphosphate = RNA(n+1) + diphosphate. In terms of biological role, DNA-dependent RNA polymerase catalyzes the transcription of DNA into RNA using the four ribonucleoside triphosphates as substrates. In Fagopyrum esculentum subsp. ancestrale (Wild buckwheat), this protein is DNA-directed RNA polymerase subunit beta'.